The chain runs to 1397 residues: Protein RhsC (1397 aa).

Repeat copies occupy residues 330-352, 353-374, 375-417, 418-438, 439-460, 461-481, 482-502, 503-525, 526-546, 547-567, 568-588, 589-609, 610-629, 630-650, 651-671, 672-691, 692-711, 712-734, 735-758, 808-828, 829-850, 851-871, 872-894, 895-930, 931-959, 960-984, 985-1019, and 1162-1186. Residues 330–1186 are 28 X approximate tandem repeats; sequence NTQVRSFTYD…LNEENPHQLQ (857 aa). A disordered region spans residues 1292–1312; it reads GGQDQRGESKGDGLWGPGKAS.

Belongs to the RHS family.

In terms of biological role, rhs elements have a nonessential function. They may play an important role in the natural ecology of the cell. The protein is Protein RhsC (rhsC) of Escherichia coli (strain K12).